Here is a 564-residue protein sequence, read N- to C-terminus: NAD-dependent malic enzyme (564 aa).

The active-site Proton donor is the Y102. R155 serves as a coordination point for NAD(+). The Proton acceptor role is filled by K173. E244, D245, and D268 together coordinate a divalent metal cation. NAD(+)-binding residues include D268 and N417.

It belongs to the malic enzymes family. In terms of assembly, homotetramer. Requires Mg(2+) as cofactor. It depends on Mn(2+) as a cofactor.

It carries out the reaction (S)-malate + NAD(+) = pyruvate + CO2 + NADH. The catalysed reaction is oxaloacetate + H(+) = pyruvate + CO2. This chain is NAD-dependent malic enzyme, found in Pseudomonas aeruginosa (strain ATCC 15692 / DSM 22644 / CIP 104116 / JCM 14847 / LMG 12228 / 1C / PRS 101 / PAO1).